Reading from the N-terminus, the 80-residue chain is Metallothionein-like protein type 2, MT2-28 (80 aa).

Belongs to the metallothionein superfamily. Type 15 family.

Its function is as follows. Metallothioneins have a high content of cysteine residues that bind various heavy metals. This is Metallothionein-like protein type 2, MT2-28 from Brassica juncea (Indian mustard).